Reading from the N-terminus, the 450-residue chain is Protein indeterminate-domain 13 (450 aa).

A Phosphoserine modification is found at Ser-54. 2 consecutive C2H2-type zinc fingers follow at residues 64-86 (FFCEICNKGFQREQNLQLHKRGH) and 106-136 (YICPEKSCVHHDPARALGDLTGIKKHFSRKH). Residues 128–135 (IKKHFSRK) carry the Nuclear localization signal motif. Residues 141 to 165 (WKCDKCSKKYAVISDWKAHNKICGS) form a C2H2-type 2; degenerate zinc finger. Residues Cys-143, Cys-146, His-159, Cys-163, Cys-170, Cys-172, His-185, and Cys-189 each contribute to the Zn(2+) site. Residues 168–191 (FRCDCGTLFSRKDSFISHRSFCDV) form a CCHC-type 2; atypical zinc finger. The SHR-binding stretch occupies residues 178–190 (RKDSFISHRSFCD). Residues 248 to 263 (FGQKFTNSNPTQQQPN) are compositionally biased toward polar residues. Residues 248 to 280 (FGQKFTNSNPTQQQPNALALSSPPSPRSTSDSV) are disordered.

The protein resides in the nucleus. Probable transcription factor. This Arabidopsis thaliana (Mouse-ear cress) protein is Protein indeterminate-domain 13.